The sequence spans 310 residues: Mycothiol acetyltransferase (310 aa).

N-acetyltransferase domains lie at Thr-5 to Arg-155 and Pro-160 to Ala-309. Leu-80–Val-82 is a binding site for acetyl-CoA. The 1D-myo-inositol 2-(L-cysteinylamino)-2-deoxy-alpha-D-glucopyranoside site is built by Asp-187, Lys-226, and Glu-238. Position 242–244 (Ile-242–Thr-244) interacts with acetyl-CoA. Tyr-276 is a binding site for 1D-myo-inositol 2-(L-cysteinylamino)-2-deoxy-alpha-D-glucopyranoside. Asn-281–Arg-286 provides a ligand contact to acetyl-CoA.

It belongs to the acetyltransferase family. MshD subfamily. As to quaternary structure, monomer.

The enzyme catalyses 1D-myo-inositol 2-(L-cysteinylamino)-2-deoxy-alpha-D-glucopyranoside + acetyl-CoA = mycothiol + CoA + H(+). Catalyzes the transfer of acetyl from acetyl-CoA to desacetylmycothiol (Cys-GlcN-Ins) to form mycothiol. This chain is Mycothiol acetyltransferase, found in Acidimicrobium ferrooxidans (strain DSM 10331 / JCM 15462 / NBRC 103882 / ICP).